We begin with the raw amino-acid sequence, 95 residues long: Antitoxin VapB (95 aa).

Antitoxin component of a type II toxin-antitoxin (TA) system. Partially neutralizes the RNase activity of cognate toxin VapC. The chain is Antitoxin VapB from Rickettsia bellii (strain RML369-C).